Consider the following 112-residue polypeptide: Large ribosomal subunit protein uL24 (112 aa).

This sequence belongs to the universal ribosomal protein uL24 family. In terms of assembly, part of the 50S ribosomal subunit.

Functionally, one of two assembly initiator proteins, it binds directly to the 5'-end of the 23S rRNA, where it nucleates assembly of the 50S subunit. In terms of biological role, one of the proteins that surrounds the polypeptide exit tunnel on the outside of the subunit. The sequence is that of Large ribosomal subunit protein uL24 from Magnetococcus marinus (strain ATCC BAA-1437 / JCM 17883 / MC-1).